Consider the following 225-residue polypeptide: Peptidyl-tRNA hydrolase (225 aa).

TRNA is bound at residue tyrosine 27. Histidine 32 serves as the catalytic Proton acceptor. TRNA contacts are provided by tyrosine 78, asparagine 80, and asparagine 126. Residues 198–225 form a disordered region; it reads FNPLDFSGPDRQDQPAPLNPAKTAPGES.

Belongs to the PTH family. As to quaternary structure, monomer.

The protein resides in the cytoplasm. The catalysed reaction is an N-acyl-L-alpha-aminoacyl-tRNA + H2O = an N-acyl-L-amino acid + a tRNA + H(+). Hydrolyzes ribosome-free peptidyl-tRNAs (with 1 or more amino acids incorporated), which drop off the ribosome during protein synthesis, or as a result of ribosome stalling. Its function is as follows. Catalyzes the release of premature peptidyl moieties from peptidyl-tRNA molecules trapped in stalled 50S ribosomal subunits, and thus maintains levels of free tRNAs and 50S ribosomes. This Synechococcus sp. (strain JA-3-3Ab) (Cyanobacteria bacterium Yellowstone A-Prime) protein is Peptidyl-tRNA hydrolase.